The chain runs to 473 residues: Cannabinoid receptor 1 (473 aa).

The Extracellular portion of the chain corresponds to 1 to 118; the sequence is MKSILDGLAD…CFMILTASQQ (118 aa). Residues 2 to 23 form a required for mitochondrial localization region; that stretch reads KSILDGLADTTFRTITTDLLYM. Asn-79 and Asn-85 each carry an N-linked (GlcNAc...) asparagine glycan. A helical membrane pass occupies residues 119-144; sequence LIIAVLSLTLGTFTVLENFLVLCVIL. Residues 145–156 lie on the Cytoplasmic side of the membrane; the sequence is QSRTLRCRPSYH. The chain crosses the membrane as a helical span at residues 157–177; the sequence is FIGSLAVADLLGSVIFVYSFL. At 178 to 189 the chain is on the extracellular side; it reads DFHVFHRKDSSN. A helical membrane pass occupies residues 190-214; sequence VFLFKLGGVTASFTASVGSLFLTAI. At 215-234 the chain is on the cytoplasmic side; the sequence is DRYISIHRPLAYKRIVTRTK. Residues 235 to 257 traverse the membrane as a helical segment; that stretch reads AVIAFCVMWTIAIIIAVLPLLGW. At 258-275 the chain is on the extracellular side; that stretch reads NCKKLKSVCSDIFPLIDE. The chain crosses the membrane as a helical span at residues 276–301; sequence NYLMFWIGVTSILLLFIVYAYVYILW. The Cytoplasmic segment spans residues 302–346; the sequence is KAHSHAVRMLQRGTQKSIIIHTSEDGKVQITRPEQTRMDIRLAKT. The chain crosses the membrane as a helical span at residues 347 to 367; that stretch reads LVLILVVLIICWGPLLAIMVY. Residues 368–379 lie on the Extracellular side of the membrane; sequence DVFGKMNNPIKT. The helical transmembrane segment at 380–401 threads the bilayer; it reads VFAFCSMLCLMDSTVNPIIYAL. Over 402 to 473 the chain is Cytoplasmic; that stretch reads RSQDLRHAFL…VSTETSGEAV (72 aa). A lipid anchor (S-palmitoyl cysteine) is attached at Cys-417.

The protein belongs to the G-protein coupled receptor 1 family. Palmitoylation at Cys-417 is important for recruitment at both plasma membrane and lipid rafts and association with G protein alpha subunits.

The protein localises to the cell membrane. Its subcellular location is the mitochondrion outer membrane. It is found in the cell projection. It localises to the axon. The protein resides in the presynapse. Hemopressin, a peptide derived from hemoglobin subunit alpha (HBA1 and/or HBA2), acts as an antagonist peptide: hemopressin-binding efficiently blocks cannabinoid receptor CNR1 and subsequent signaling. G-protein coupled receptor for cannabinoids. Mediates many cannabinoid-induced effects in the central nervous system (CNS), as well as in peripheral tissues. Regulates cellular respiration and energy production in response to cannabinoids. Signaling typically involves reduction in cyclic AMP. The protein is Cannabinoid receptor 1 (CNR1) of Taricha granulosa (Roughskin newt).